The chain runs to 384 residues: A-type ATP synthase subunit C (384 aa).

This sequence belongs to the V-ATPase V0D/AC39 subunit family. Has multiple subunits with at least A(3), B(3), C, D, E, F, H, I and proteolipid K(x).

The protein resides in the cell membrane. Component of the A-type ATP synthase that produces ATP from ADP in the presence of a proton gradient across the membrane. The polypeptide is A-type ATP synthase subunit C (Methanobrevibacter smithii (strain ATCC 35061 / DSM 861 / OCM 144 / PS)).